Consider the following 326-residue polypeptide: Flotillin-like protein FloA (326 aa).

A run of 2 helical transmembrane segments spans residues 6 to 26 and 27 to 47; these read IILFFLVVAVIVLFYFVGSSV and SLWIQALVSGARVGLLNIVFM.

Belongs to the flotillin-like FloA family. As to quaternary structure, homooligomerizes.

The protein localises to the cell membrane. It localises to the membrane raft. Its function is as follows. Found in functional membrane microdomains (FMM) that may be equivalent to eukaryotic membrane rafts. FMMs are highly dynamic and increase in number as cells age. Flotillins are thought to be important factors in membrane fluidity. The sequence is that of Flotillin-like protein FloA from Desulfosudis oleivorans (strain DSM 6200 / JCM 39069 / Hxd3) (Desulfococcus oleovorans).